We begin with the raw amino-acid sequence, 445 residues long: Ribulose bisphosphate carboxylase large chain (445 aa).

Substrate is bound by residues Asn89 and Thr139. Residue Lys141 is the Proton acceptor of the active site. Substrate is bound at residue Lys143. The Mg(2+) site is built by Lys167, Asp169, and Glu170. Residue Lys167 is modified to N6-carboxylysine. The Proton acceptor role is filled by His260. Residues Arg261, His293, and Ser345 each coordinate substrate.

This sequence belongs to the RuBisCO large chain family. Type I subfamily. In terms of assembly, heterohexadecamer of 8 large chains and 8 small chains; disulfide-linked. The disulfide link is formed within the large subunit homodimers. The cofactor is Mg(2+). The disulfide bond which can form in the large chain dimeric partners within the hexadecamer appears to be associated with oxidative stress and protein turnover.

It localises to the plastid. Its subcellular location is the chloroplast. It carries out the reaction 2 (2R)-3-phosphoglycerate + 2 H(+) = D-ribulose 1,5-bisphosphate + CO2 + H2O. The enzyme catalyses D-ribulose 1,5-bisphosphate + O2 = 2-phosphoglycolate + (2R)-3-phosphoglycerate + 2 H(+). RuBisCO catalyzes two reactions: the carboxylation of D-ribulose 1,5-bisphosphate, the primary event in carbon dioxide fixation, as well as the oxidative fragmentation of the pentose substrate in the photorespiration process. Both reactions occur simultaneously and in competition at the same active site. In Callicarpa dichotoma (Purple beautyberry), this protein is Ribulose bisphosphate carboxylase large chain.